The primary structure comprises 1059 residues: Translation initiation factor IF-2 (1059 aa).

Polar residues-rich tracts occupy residues 55–75 (LPHS…NQDS) and 107–126 (KINN…NNQV). Disordered stretches follow at residues 55 to 81 (LPHS…GYNE), 93 to 394 (PKPL…RLRL), and 418 to 468 (SLSL…QSAE). Basic and acidic residues predominate over residues 178-187 (DSNEKSKVEV). Positions 202 to 211 (LNRNLRNTGV) are enriched in polar residues. Residues 216-229 (QKNKKPKQEGKKRK) are compositionally biased toward basic residues. 2 stretches are compositionally biased toward basic and acidic residues: residues 230–252 (DKEE…DTSI) and 259–273 (SKKE…RESV). Polar residues predominate over residues 274 to 284 (KTSASDTSSQL). Basic and acidic residues-rich tracts occupy residues 291–300 (KPTVKLKQEQ) and 359–368 (LTKDKKVSKW). The segment covering 452–463 (SHESVQSESNEQ) has biased composition (low complexity). One can recognise a tr-type G domain in the interval 556 to 733 (RRPPVVTIMG…EVEDLQANPE (178 aa)). The segment at 565-572 (GHVDHGKT) is G1. 565–572 (GHVDHGKT) is a binding site for GTP. The G2 stretch occupies residues 590–594 (GITQH). Residues 615-618 (DTPG) are G3. GTP-binding positions include 615–619 (DTPGH) and 669–672 (NKID). A G4 region spans residues 669–672 (NKID). The interval 705 to 707 (SAI) is G5.

Belongs to the TRAFAC class translation factor GTPase superfamily. Classic translation factor GTPase family. IF-2 subfamily.

The protein localises to the cytoplasm. One of the essential components for the initiation of protein synthesis. Protects formylmethionyl-tRNA from spontaneous hydrolysis and promotes its binding to the 30S ribosomal subunits. Also involved in the hydrolysis of GTP during the formation of the 70S ribosomal complex. The sequence is that of Translation initiation factor IF-2 from Trichodesmium erythraeum (strain IMS101).